Consider the following 288-residue polypeptide: 4-hydroxy-3-methylbut-2-enyl diphosphate reductase (288 aa).

Cysteine 12 contacts [4Fe-4S] cluster. The (2E)-4-hydroxy-3-methylbut-2-enyl diphosphate site is built by histidine 42 and histidine 77. Residues histidine 42 and histidine 77 each coordinate dimethylallyl diphosphate. Residues histidine 42 and histidine 77 each coordinate isopentenyl diphosphate. Cysteine 99 lines the [4Fe-4S] cluster pocket. Histidine 127 is a (2E)-4-hydroxy-3-methylbut-2-enyl diphosphate binding site. A dimethylallyl diphosphate-binding site is contributed by histidine 127. Isopentenyl diphosphate is bound at residue histidine 127. Glutamate 129 functions as the Proton donor in the catalytic mechanism. A (2E)-4-hydroxy-3-methylbut-2-enyl diphosphate-binding site is contributed by threonine 165. Residue cysteine 193 participates in [4Fe-4S] cluster binding. (2E)-4-hydroxy-3-methylbut-2-enyl diphosphate is bound by residues serine 221, serine 222, asparagine 223, and serine 265. The dimethylallyl diphosphate site is built by serine 221, serine 222, asparagine 223, and serine 265. Residues serine 221, serine 222, asparagine 223, and serine 265 each contribute to the isopentenyl diphosphate site.

It belongs to the IspH family. [4Fe-4S] cluster is required as a cofactor.

The catalysed reaction is isopentenyl diphosphate + 2 oxidized [2Fe-2S]-[ferredoxin] + H2O = (2E)-4-hydroxy-3-methylbut-2-enyl diphosphate + 2 reduced [2Fe-2S]-[ferredoxin] + 2 H(+). The enzyme catalyses dimethylallyl diphosphate + 2 oxidized [2Fe-2S]-[ferredoxin] + H2O = (2E)-4-hydroxy-3-methylbut-2-enyl diphosphate + 2 reduced [2Fe-2S]-[ferredoxin] + 2 H(+). The protein operates within isoprenoid biosynthesis; dimethylallyl diphosphate biosynthesis; dimethylallyl diphosphate from (2E)-4-hydroxy-3-methylbutenyl diphosphate: step 1/1. It functions in the pathway isoprenoid biosynthesis; isopentenyl diphosphate biosynthesis via DXP pathway; isopentenyl diphosphate from 1-deoxy-D-xylulose 5-phosphate: step 6/6. Catalyzes the conversion of 1-hydroxy-2-methyl-2-(E)-butenyl 4-diphosphate (HMBPP) into a mixture of isopentenyl diphosphate (IPP) and dimethylallyl diphosphate (DMAPP). Acts in the terminal step of the DOXP/MEP pathway for isoprenoid precursor biosynthesis. This is 4-hydroxy-3-methylbut-2-enyl diphosphate reductase from Caldanaerobacter subterraneus subsp. tengcongensis (strain DSM 15242 / JCM 11007 / NBRC 100824 / MB4) (Thermoanaerobacter tengcongensis).